Reading from the N-terminus, the 317-residue chain is tRNA dimethylallyltransferase (317 aa).

14-21 (GPTAVGKT) serves as a coordination point for ATP. 16–21 (TAVGKT) provides a ligand contact to substrate. The interval 39-42 (DSMQ) is interaction with substrate tRNA.

The protein belongs to the IPP transferase family. As to quaternary structure, monomer. Mg(2+) is required as a cofactor.

The catalysed reaction is adenosine(37) in tRNA + dimethylallyl diphosphate = N(6)-dimethylallyladenosine(37) in tRNA + diphosphate. Catalyzes the transfer of a dimethylallyl group onto the adenine at position 37 in tRNAs that read codons beginning with uridine, leading to the formation of N6-(dimethylallyl)adenosine (i(6)A). The polypeptide is tRNA dimethylallyltransferase (Bacillus cereus (strain AH187)).